The sequence spans 680 residues: Galactose oxidase (680 aa).

Residues 1-24 (MKHFLSLALCFSSINAVAVTVPHK) form the signal peptide. Positions 25 to 41 (SGGTGSPEGSLQFLSLR) are excised as a propeptide. The F5/8 type C domain occupies 42–189 (ASAPIGSAIS…SIAEINVFQA (148 aa)). Residues C59 and C68 are joined by a disulfide bond. Kelch repeat units follow at residues 223–268 (RVLM…HDMF), 279–321 (QIVV…TMSD), 323–372 (RVFT…LYRS), 436–490 (KILT…VLPD), and 492–544 (STFI…LLLP). Residues 269-313 (CPGISMDGNGQIVVTGGNDAKKTSLYDSSSDSWIPGPDMQVARGY) constitute a cross-link (3'-(S-cysteinyl)-tyrosine (Cys-Tyr)). Position 313 (Y313) interacts with Cu cation. Cu cation contacts are provided by Y536 and H537. The Proton acceptor role is filled by Y536. C556 and C559 form a disulfide bridge. H622 contributes to the Cu cation binding site.

In terms of assembly, monomer. It depends on Cu(2+) as a cofactor. Galactose oxidase contains a protein-derived free radical cofactor. In the active state, Tyr-313, which is cross-linked to Cys-269 via a thioether bond, is oxidized to a radical and acts with Cu(2+) as a two-electron acceptor in the oxidation reaction. The cross-link is believed to modulate the redox potential of the tyrosyl radical, which is further stabilized by a stacking interaction with Trp-331 in the active site. The post-translational formation of the cross-link is closely linked to the propeptide cleavage event, and both are copper-dependent, autocatalytic processes. The propeptide may act as an intramolecular chaperone, facilitating thioester bond formation and copper binding by positioning of active-site residues, including copper ligands.

Its subcellular location is the secreted. The enzyme catalyses D-galactose + O2 = D-galacto-hexodialdose + H2O2. In terms of biological role, catalyzes the sterospecific oxidation of primary alcohols to the corresponding aldehydes. The biologically relevant substrate of the enzyme is not known as the enzyme exhibits broad substrate specificity from small alcohols through sugars to oligo- and polysaccharides. The polypeptide is Galactose oxidase (GAOA) (Gibberella zeae (strain ATCC MYA-4620 / CBS 123657 / FGSC 9075 / NRRL 31084 / PH-1) (Wheat head blight fungus)).